The chain runs to 932 residues: UPF0182 protein Amet_0022 (932 aa).

The next 7 membrane-spanning stretches (helical) occupy residues 14–34, 60–80, 104–124, 166–186, 208–228, 256–276, and 286–306; these read VIIGLGIFIFIFLFGFLSEIL, LQIGIPLFIVGTILYYLYLIG, ILILPAFVFGLMTSTSVAGSL, TSILFLMVIITVIFYVIMFLI, LLQIALKQFAALGVIFFLVLA, VTLWVYRAQILASLLSATGVV, and LLLIAPISIIAVGILGNVISL.

It belongs to the UPF0182 family.

The protein resides in the cell membrane. The chain is UPF0182 protein Amet_0022 from Alkaliphilus metalliredigens (strain QYMF).